The sequence spans 188 residues: MPVADTSQLISGVAERYASSLFELALDAGSIEAVGADLTRIQALIDGSDDLKRLIVSPVFSADDQFKAISALVEKFGFSGLVGNFLKVVARNRRLFVLPGIIKAFRLLAARHKGEITADVTSAHALTLAQEIELKAALKGVTGKDVAVNVTVDPSILGGLIVKVGSRQIDTSLRTKLSTLKLALKEVG.

Belongs to the ATPase delta chain family. F-type ATPases have 2 components, F(1) - the catalytic core - and F(0) - the membrane proton channel. F(1) has five subunits: alpha(3), beta(3), gamma(1), delta(1), epsilon(1). F(0) has three main subunits: a(1), b(2) and c(10-14). The alpha and beta chains form an alternating ring which encloses part of the gamma chain. F(1) is attached to F(0) by a central stalk formed by the gamma and epsilon chains, while a peripheral stalk is formed by the delta and b chains.

It localises to the cell inner membrane. Its function is as follows. F(1)F(0) ATP synthase produces ATP from ADP in the presence of a proton or sodium gradient. F-type ATPases consist of two structural domains, F(1) containing the extramembraneous catalytic core and F(0) containing the membrane proton channel, linked together by a central stalk and a peripheral stalk. During catalysis, ATP synthesis in the catalytic domain of F(1) is coupled via a rotary mechanism of the central stalk subunits to proton translocation. In terms of biological role, this protein is part of the stalk that links CF(0) to CF(1). It either transmits conformational changes from CF(0) to CF(1) or is implicated in proton conduction. This chain is ATP synthase subunit delta, found in Rhizobium meliloti (strain 1021) (Ensifer meliloti).